Here is a 570-residue protein sequence, read N- to C-terminus: Double-stranded RNA-binding protein Staufen homolog 2 (570 aa).

A DRBM 1 domain is found at 8 to 75; sequence TPVCLVNELA…ANKALTESTL (68 aa). Disordered regions lie at residues 71–94 and 178–203; these read TESTLPKPVQKPPKSNVNNNPGSI and ALQNEPIPEKSPQNGESGKEMDDDKD. Over residues 83 to 94 the composition is skewed to polar residues; sequence PKSNVNNNPGSI. A DRBM 2 domain is found at 95–181; the sequence is TPTVELNGLA…AMKALQALQN (87 aa). S188 carries the post-translational modification Phosphoserine. Positions 194–203 are enriched in basic and acidic residues; the sequence is SGKEMDDDKD. DRBM domains lie at 207-274 and 307-375; these read SEIS…ELKK and NPIS…QLGY. Short sequence motifs (nuclear localization signal) lie at residues 273–291 and 373–412; these read KKLPPLPVVEKPKLFFKKR and LGYKASTSLQDPLDKTGENKGWSGPKPGFPEPTNNTPKGI. Positions 381-413 are disordered; the sequence is LQDPLDKTGENKGWSGPKPGFPEPTNNTPKGIL. Residues 381 to 570 form a required for dendritic transport region; that stretch reads LQDPLDKTGE…QDCKKSKSAI (190 aa). Residue S395 is modified to Phosphoserine. The residue at position 405 (T405) is a Phosphothreonine. Phosphoserine occurs at positions 416, 426, 440, 455, and 492. Positions 545–570 are disordered; it reads LREKADNNQAKPASISQDCKKSKSAI. The segment covering 551–561 has biased composition (polar residues); sequence NNQAKPASISQ.

As to quaternary structure, interacts with microtubules. Isoform 2 and isoform 3 may also interact with ribosomes, and this association is independent of translation. Identified in a mRNP complex, at least composed of DHX9, DDX3X, ELAVL1, HNRNPU, IGF2BP1, ILF3, PABPC1, PCBP2, PTBP2, STAU1, STAU2, SYNCRIP and YBX1. Interacts with the exportin XPO5. This requires RNA and RAN bound to GTP. Interacts with TRIM71 (via NHL repeats) in an RNA-dependent manner. In terms of tissue distribution, expressed in brain and neurons, where isoform 2 and isoform 3 appear to be the most abundant. Expressed at the neuromuscular junction of the extensor digitorum longus, tibialis anterior and soleus muscles. Expression at neuromuscular junctions is most pronounced in slow-twitch muscle. Also weakly expressed in heart, kidney, ovary and testis.

It localises to the cytoplasm. Its subcellular location is the nucleus. The protein localises to the nucleolus. It is found in the endoplasmic reticulum. Its function is as follows. RNA-binding protein required for the microtubule-dependent transport of neuronal RNA from the cell body to the dendrite. As protein synthesis occurs within the dendrite, the localization of specific mRNAs to dendrites may be a prerequisite for neurite outgrowth and plasticity at sites distant from the cell body. This Mus musculus (Mouse) protein is Double-stranded RNA-binding protein Staufen homolog 2 (Stau2).